The following is a 249-amino-acid chain: Small ribosomal subunit protein uS3 (249 aa).

One can recognise a KH type-2 domain in the interval 38–106 (IRDFLSKGLE…QVQLNILEVK (69 aa)). The segment covering 218 to 233 (ARDDRGSRRGRNDRPR) has biased composition (basic and acidic residues). A disordered region spans residues 218–249 (ARDDRGSRRGRNDRPRRGGGRRRRAAEQKQEG).

It belongs to the universal ribosomal protein uS3 family. Part of the 30S ribosomal subunit. Forms a tight complex with proteins S10 and S14.

In terms of biological role, binds the lower part of the 30S subunit head. Binds mRNA in the 70S ribosome, positioning it for translation. This is Small ribosomal subunit protein uS3 from Corynebacterium kroppenstedtii (strain DSM 44385 / JCM 11950 / CIP 105744 / CCUG 35717).